Consider the following 121-residue polypeptide: NADPH-dependent 7-cyano-7-deazaguanine reductase (121 aa).

Residue cysteine 36 is the Thioimide intermediate of the active site. Aspartate 43 (proton donor) is an active-site residue. Substrate-binding positions include valine 58–leucine 60 and tyrosine 77–glutamate 78.

It belongs to the GTP cyclohydrolase I family. QueF type 1 subfamily.

It is found in the cytoplasm. It catalyses the reaction 7-aminomethyl-7-carbaguanine + 2 NADP(+) = 7-cyano-7-deazaguanine + 2 NADPH + 3 H(+). Its pathway is tRNA modification; tRNA-queuosine biosynthesis. Functionally, catalyzes the NADPH-dependent reduction of 7-cyano-7-deazaguanine (preQ0) to 7-aminomethyl-7-deazaguanine (preQ1). This is NADPH-dependent 7-cyano-7-deazaguanine reductase from Rhodopirellula baltica (strain DSM 10527 / NCIMB 13988 / SH1).